Here is a 2073-residue protein sequence, read N- to C-terminus: Non-reducing polyketide synthase cla3 (2073 aa).

Residues 9 to 242 (LLFGDYTEPW…EKLNIHALQH (234 aa)) form an N-terminal acylcarrier protein transacylase domain (SAT) region. The Ketosynthase family 3 (KS3) domain maps to 363–793 (SGRIAIVGMS…GGNGCLLLEE (431 aa)). Residues Cys-538, His-673, and His-712 each act as for beta-ketoacyl synthase activity in the active site. Positions 898 to 1198 (TFTGQGSQYA…KIMSTLDATG (301 aa)) are malonyl-CoA:ACP transacylase (MAT) domain. Catalysis depends on Ser-987, which acts as the For acyl/malonyl transferase activity. Residues 1276-1590 (STCAQYVITE…QNVILERLLG (315 aa)) form a product template (PT) domain region. Residues 1279-1420 (AQYVITETKT…AGLESQWEKS (142 aa)) form an N-terminal hotdog fold region. One can recognise a PKS/mFAS DH domain in the interval 1279–1586 (AQYVITETKT…FHRVQNVILE (308 aa)). Residue His-1311 is the Proton acceptor; for dehydratase activity of the active site. Residues 1439-1586 (QGHRIQRDIY…FHRVQNVILE (148 aa)) form a C-terminal hotdog fold region. Asp-1500 functions as the Proton donor; for dehydratase activity in the catalytic mechanism. Residues 1594–1637 (SSSVPAQASDPLRSKRSPQEARSLPGEAKTEKPGSTIATTSPVL) form a disordered region. A Carrier domain is found at 1641–1718 (KSEQGMFQAL…NLRCAFDEDV (78 aa)). Ser-1678 is subject to O-(pantetheine 4'-phosphoryl)serine. Over residues 1721–1738 (EFTDSEVTSGTPNSSESV) the composition is skewed to polar residues. The disordered stretch occupies residues 1721-1786 (EFTDSEVTSG…GVLDDGSPQP (66 aa)). Positions 1747–1774 (PEEHAFKEPKDDSPLARRDMDNSNDRSL) are enriched in basic and acidic residues. The segment at 1805-1950 (FLIADGSGSI…MQQHLRAIFK (146 aa)) is thioesterase (TE) domain. The active-site For thioesterase activity is the His-2058.

The protein operates within secondary metabolite biosynthesis. Its function is as follows. Highly reducing polyketide synthase; part of the gene cluster that mediates the biosynthesis of cladosporin, a tricyclic octaketide that acts as an antimalarial agent though inhibition of the Plasmodium falciparum lysyl-tRNA synthetase. The highly reducing polyketide synthase cla2 is responsible for biosynthesis up to the pentaketide stage, including of the tetrahydropyran (THP) ring, whereas the three subsequent ketide extensions with no reduction are catalyzed by the non-reducing polyketide synthase cla3. This is Non-reducing polyketide synthase cla3 from Cladosporium cladosporioides.